Here is a 308-residue protein sequence, read N- to C-terminus: D-alanine--D-alanine ligase (308 aa).

In terms of domain architecture, ATP-grasp spans 105-302 (KAIFRSLGLA…FPDLCDRILD (198 aa)). 133–188 (DLPFGLPCVVKPAGEGSSVGVHLVNAAAELGPACRDAAGYAGDVIVERYVKGTEVD) is a binding site for ATP. The Mg(2+) site is built by Asp256, Glu269, and Asn271.

The protein belongs to the D-alanine--D-alanine ligase family. It depends on Mg(2+) as a cofactor. Requires Mn(2+) as cofactor.

The protein resides in the cytoplasm. It catalyses the reaction 2 D-alanine + ATP = D-alanyl-D-alanine + ADP + phosphate + H(+). Its pathway is cell wall biogenesis; peptidoglycan biosynthesis. Its function is as follows. Cell wall formation. This chain is D-alanine--D-alanine ligase, found in Anaeromyxobacter dehalogenans (strain 2CP-C).